A 118-amino-acid polypeptide reads, in one-letter code: Small ribosomal subunit protein uS13 (118 aa).

The disordered stretch occupies residues 99 to 118 (GQRTRTNARTRKGPRKAIKK).

The protein belongs to the universal ribosomal protein uS13 family. Part of the 30S ribosomal subunit. Forms a loose heterodimer with protein S19. Forms two bridges to the 50S subunit in the 70S ribosome.

Its function is as follows. Located at the top of the head of the 30S subunit, it contacts several helices of the 16S rRNA. In the 70S ribosome it contacts the 23S rRNA (bridge B1a) and protein L5 of the 50S subunit (bridge B1b), connecting the 2 subunits; these bridges are implicated in subunit movement. Contacts the tRNAs in the A and P-sites. The chain is Small ribosomal subunit protein uS13 from Xylella fastidiosa (strain M12).